Reading from the N-terminus, the 498-residue chain is Cytochrome P450 monooxygenase ltmP (498 aa).

Residues 1–21 form the signal peptide; it reads MLMLHAVPVGICLLLWYVVYG. Asn-420 carries N-linked (GlcNAc...) asparagine glycosylation. Cys-435 contributes to the heme binding site.

It belongs to the cytochrome P450 family. The cofactor is heme.

It functions in the pathway secondary metabolite biosynthesis. Cytochrome P450 monooxygenase; part of the gene clusters that mediates the biosynthesis of lolitrems, indole-diterpene mycotoxins that are potent tremorgens in mammals, and are synthesized by clavicipitaceous fungal endophytes in association with their grass hosts. The geranylgeranyl diphosphate (GGPP) synthase ltmG is proposed to catalyze the first step in lolitrem biosynthesis. LtmG catalyzes a series of iterative condensations of isopentenyl diphosphate (IPP) with dimethylallyl diphosphate (DMAPP), geranyl diphosphate (GPP), and farnesyl diphosphate (FPP), to form GGPP. GGPP then condenses with indole-3-glycerol phosphate to form 3-geranylgeranylindole, an acyclic intermediate, to be incorporated into paxilline. Either ltmG or ltmC could be responsible for this step, as both are putative prenyl transferases. The FAD-dependent monooxygenase ltmM then catalyzes the epoxidation of the two terminal alkenes of the geranylgeranyl moiety, which is subsequently cyclized by ltmB, to paspaline. The cytochrome P450 monooxygenases ltmQ and ltmP can sequentially oxidize paspaline to terpendole E and terpendole F. Alternatively, ltmP converts paspaline to an intermediate which is oxidized by ltmQ to terpendole F. LtmF, ltmK, ltmE and ltmJ appear to be unique to the epichloe endophytes. The prenyltransferase ltmF is involved in the 27-hydroxyl-O-prenylation. The cytochrome P450 monooxygenase ltmK is required for the oxidative acetal ring formation. The multi-functional prenyltransferase ltmE is required for C20- and C21-prenylations of the indole ring of paspalanes and acts together with the cytochrome P450 monooxygenase ltmJ to yield lolitremanes by multiple oxidations and ring closures. The stereoisomer pairs of lolitriol and lolitrem N or lolitrem B and lolitrem F may be attributed to variations in the way in which ring closure can occur under the action of ltmJ. While the major product of this pathway is lolitrem B, the prenyl transferases and cytochrome P450 monooxygenases identified in this pathway have a remarkable versatility in their regio- and stereo-specificities to generate a diverse range of metabolites that are products of a metabolic grid rather than a linear pathway. In Epichloe festucae var. lolii (Neotyphodium lolii), this protein is Cytochrome P450 monooxygenase ltmP.